The primary structure comprises 532 residues: MAAKDVLFANDARQKMLKGVNLLADAVKVTLGPKGRNVVLDKSYGAPTITKDGVSVAKEIELKDKFENMGAQMVKQVASKANDEAGDGTTTATVLAQSFINEGLKAVASGMNPMDLKRGIDKATEAAVEKLREMSKPCSDKESITQVGSISANSDRAIGEIIAEAMEKVGRNGVITVEEGQGLDNELSVVEGMQFDRGYLSPYFITNQENGSVELDNPYILLVDKKVSSIRELLPVLEEVAKSSRSLLIIAEDIEGEALATLVVNNMRGIVRATAVKAPGFGDNRKAMMEDIAVLTAGTVISEEIGLELEKATLEQLGSAKKVTITKDTTTIVGGAAEASAIADRVASIEKQIETTTSQYDKDKLQQRVAKLSGGVAVIKIGAATEVEMKEKKDRVDDALHATRAAVEEGIVAGGGVALTKIAKELADLKGDNDDQNVGIRVALRAMEEPLRQIATNAGDEASVVANAVKAGDADYGYNAATGEYGNMIEMGILDPAKVTRSALQFAASVAGLMITTEAMITNHVEDKELDI.

ATP contacts are provided by residues 30–33 (TLGP), K51, 87–91 (DGTTT), G415, 479–481 (NAA), and D495.

This sequence belongs to the chaperonin (HSP60) family. Forms a cylinder of 14 subunits composed of two heptameric rings stacked back-to-back. Interacts with the co-chaperonin GroES.

The protein localises to the cytoplasm. The catalysed reaction is ATP + H2O + a folded polypeptide = ADP + phosphate + an unfolded polypeptide.. Functionally, together with its co-chaperonin GroES, plays an essential role in assisting protein folding. The GroEL-GroES system forms a nano-cage that allows encapsulation of the non-native substrate proteins and provides a physical environment optimized to promote and accelerate protein folding. The sequence is that of Chaperonin GroEL 2 from Vibrio parahaemolyticus serotype O3:K6 (strain RIMD 2210633).